The primary structure comprises 363 residues: NADH-quinone oxidoreductase subunit H (363 aa).

The next 10 helical transmembrane spans lie at 29–49 (VLKILMIAIPLIVSVAFYVVW), 62–82 (GPMYVGMGLFQAFADVFKLLF), 94–114 (VIFVIAPLLTLAPSFAAWAVV), 127–147 (VGLLYLLAMTSLGVYGIILAG), 166–186 (VVSYEIAMGFALVGVMIAAGS), 202–222 (FFDWFLIPLFPLFIVYWVSGV), 239–257 (IVAGHMVEYSGSVFALFFL), 264–286 (ILVSFLISIFFLGGWLSPIQGWV), 293–313 (LIDWVWNGGWPWLLLKVLFFA), and 339–359 (FIPLTIVWIAVTALMVFSGVI).

Belongs to the complex I subunit 1 family. NDH-1 is composed of 14 different subunits. Subunits NuoA, H, J, K, L, M, N constitute the membrane sector of the complex.

Its subcellular location is the cell inner membrane. The enzyme catalyses a quinone + NADH + 5 H(+)(in) = a quinol + NAD(+) + 4 H(+)(out). Functionally, NDH-1 shuttles electrons from NADH, via FMN and iron-sulfur (Fe-S) centers, to quinones in the respiratory chain. The immediate electron acceptor for the enzyme in this species is believed to be ubiquinone. Couples the redox reaction to proton translocation (for every two electrons transferred, four hydrogen ions are translocated across the cytoplasmic membrane), and thus conserves the redox energy in a proton gradient. This subunit may bind ubiquinone. In Xylella fastidiosa (strain M12), this protein is NADH-quinone oxidoreductase subunit H.